The chain runs to 676 residues: MKTVLLLICLLGSAFTTPTDPLNYQFGAHGQKTAEKHKYTHSEMPEEENTGFVNKGDVLSGHRTIKAEVPVLDTQKDEPWASRRQGQGDGEHQTKNSLRSINFLTLHSNPGLASDNQESNSGSSREQHSSEHHQPRRHRKHGNMAGQWALRGESPVDALGLVRERNTWKYNKNTVGLDENNNGSEEEEAGEEEDEEWGEETDYRDMKHRARGTSHGREYRRWQNENSRPSGEFLRDSSLPVRITKRHGEKFSMEEESQEKLYKEGKLPLSKKNHNEDQGEKRQSEESKEHFQVVNQRKHRAVTKRQDKEGSNAEEDDNDSGDDGEEDLGNVWREAVYEEEERMQSNDQDSITNKQKEEITAGDDSGVYREMQDYKGDKIKDVTHSEDNHYHHEPPNSSSKQQLQTSSSVESMNSTEHEDEVKTTGGSYHEESARNSTGKALPDLCRNFHCKRGKVCQADKQGKPSCICQDPAACPSTKDYKRVCGTDNKTYDGTCQLFGTKCQLEGTKMGRQLHLDYMGACKHIPHCTDYEVNQFPLRMRDWLKNILMQYYERDQDTSAFLTEKQRNKVKKIYLNEKRLVSGEHPVELLLHDFEKNYHMYLYPVHWQFYQLDQHPVDRSLTHSELAPLRASLVPMEHCITRFFQECDGDQDKLITLKEWCHCFAIKEEDINENLLF.

An N-terminal signal peptide occupies residues 1–16; the sequence is MKTVLLLICLLGSAFT. The span at 35–44 shows a compositional bias: basic and acidic residues; the sequence is EKHKYTHSEM. 3 disordered regions span residues 35–151, 173–369, and 385–437; these read EKHK…WALR, NTVG…GVYR, and SEDN…RNST. Positions 95–108 are enriched in polar residues; it reads KNSLRSINFLTLHS. An N-linked (GlcNAc...) asparagine glycan is attached at asparagine 182. The span at 184–202 shows a compositional bias: acidic residues; it reads SEEEEAGEEEDEEWGEETD. 2 stretches are compositionally biased toward basic and acidic residues: residues 249–266 and 273–291; these read EKFSMEEESQEKLYKEGK and NHNEDQGEKRQSEESKEHF. Residues 312 to 328 are compositionally biased toward acidic residues; sequence NAEEDDNDSGDDGEEDL. Asparagine 318 is a glycosylation site (N-linked (GlcNAc...) asparagine). Positions 385-394 are enriched in basic and acidic residues; sequence SEDNHYHHEP. Asparagine 396 carries N-linked (GlcNAc...) asparagine glycosylation. Over residues 397 to 408 the composition is skewed to low complexity; sequence SSSKQQLQTSSS. Asparagine 413 is a glycosylation site (N-linked (GlcNAc...) asparagine). Positions 415-433 are enriched in basic and acidic residues; that stretch reads TEHEDEVKTTGGSYHEESA. Asparagine 435 carries N-linked (GlcNAc...) asparagine glycosylation. In terms of domain architecture, Follistatin-like spans 444-466; the sequence is LCRNFHCKRGKVCQADKQGKPSC. Cystine bridges form between cysteine 445-cysteine 456, cysteine 450-cysteine 466, cysteine 468-cysteine 502, cysteine 474-cysteine 495, cysteine 484-cysteine 521, cysteine 527-cysteine 638, and cysteine 646-cysteine 662. One can recognise a Kazal-like domain in the interval 462–523; it reads GKPSCICQDP…HLDYMGACKH (62 aa). Asparagine 488 carries N-linked (GlcNAc...) asparagine glycosylation. The EF-hand domain occupies 634-669; that stretch reads PMEHCITRFFQECDGDQDKLITLKEWCHCFAIKEED. Ca(2+)-binding residues include aspartate 647, aspartate 649, aspartate 651, and glutamate 658.

This sequence belongs to the SPARC family. Glial (Mueller) cells of the neuroretina.

The protein resides in the secreted. The protein localises to the extracellular space. It is found in the extracellular matrix. In terms of biological role, could play a role in the late stage of neuroretina morphogenesis. This is SPARC-like protein 1 (SPARCL1) from Coturnix japonica (Japanese quail).